A 352-amino-acid polypeptide reads, in one-letter code: MCYRQETMSGLLDGIPEAVALRCLAHVPLHLHPNLELVSRSWRAAIRSHELFRVRKELRSSEHLLCVCAFDPENIWQVYSPNCDRWLTLPLLPSRIRHLAHFGAVTTAGMLFVLGGGSDAVSPVTGDHDGTFATDQVWSYDFVQRQWTPRASMLVPRAMFACCVLQGKIVVAGGFTTCRKSISGAEMYDPENDVWTSIPDLHQTHNSACSGLVVNGKVHVLHKGLSTVQVLESVKLGWDVKDYGWPQGPMVVVEDVLYVMSHGLVFKQEGDTWKMVASASEFKRRIGMAMTSLSDEVLIVGGVIGPDRLNWDIKPLSDVDALTVGNDRPAWRSVAPMTRCRGTILGCTQLTI.

Residues 9-55 (SGLLDGIPEAVALRCLAHVPLHLHPNLELVSRSWRAAIRSHELFRVR) enclose the F-box domain. Kelch repeat units follow at residues 57 to 109 (ELRS…TTAG), 110 to 167 (MLFV…VLQG), 168 to 215 (KIVV…LVVN), 243 to 293 (YGWP…MTSL), and 296 to 351 (EVLI…TQLT).

In terms of assembly, part of a SCF (ASK-cullin-F-box) protein ligase complex. Interacts with SKP1A/ASK1.

The protein operates within protein modification; protein ubiquitination. Component of SCF(ASK-cullin-F-box) E3 ubiquitin ligase complexes, which may mediate the ubiquitination and subsequent proteasomal degradation of target proteins. The sequence is that of F-box/kelch-repeat protein SKIP30 (SKIP30) from Arabidopsis thaliana (Mouse-ear cress).